The chain runs to 291 residues: Venom metalloproteinase inhibitor DM43 (291 aa).

2 consecutive Ig-like V-type domains span residues 22 to 79 (TNVT…ILTS) and 114 to 171 (GLET…PASA). N-linked (GlcNAc...) asparagine glycosylation occurs at Asn-23. 2 disulfide bridges follow: Cys-28–Cys-74 and Cys-121–Cys-163. Residues Asn-156, Asn-160, and Asn-175 are each glycosylated (N-linked (GlcNAc...) asparagine). Residues 191 to 288 (PKANFYILND…DSNVLELDLS (98 aa)) form the Ig-like V-type 3 domain. A disulfide bridge links Cys-213 with Cys-265.

Homodimer. In terms of processing, N-glycosylated. Blood and milk.

In terms of biological role, metalloproteinase inhibitor. This is Venom metalloproteinase inhibitor DM43 from Didelphis marsupialis (Southern opossum).